A 151-amino-acid polypeptide reads, in one-letter code: D-aminoacyl-tRNA deacylase (151 aa).

The Gly-cisPro motif, important for rejection of L-amino acids motif lies at 137–138 (GP).

Belongs to the DTD family. As to quaternary structure, homodimer.

Its subcellular location is the cytoplasm. The enzyme catalyses glycyl-tRNA(Ala) + H2O = tRNA(Ala) + glycine + H(+). It catalyses the reaction a D-aminoacyl-tRNA + H2O = a tRNA + a D-alpha-amino acid + H(+). In terms of biological role, an aminoacyl-tRNA editing enzyme that deacylates mischarged D-aminoacyl-tRNAs. Also deacylates mischarged glycyl-tRNA(Ala), protecting cells against glycine mischarging by AlaRS. Acts via tRNA-based rather than protein-based catalysis; rejects L-amino acids rather than detecting D-amino acids in the active site. By recycling D-aminoacyl-tRNA to D-amino acids and free tRNA molecules, this enzyme counteracts the toxicity associated with the formation of D-aminoacyl-tRNA entities in vivo and helps enforce protein L-homochirality. This Acaryochloris marina (strain MBIC 11017) protein is D-aminoacyl-tRNA deacylase.